A 212-amino-acid polypeptide reads, in one-letter code: dITP/XTP pyrophosphatase (212 aa).

Substrate is bound at residue 7 to 12 (SNNAKK). Residues Glu39 and Asp68 each contribute to the Mg(2+) site. Residue Asp68 is the Proton acceptor of the active site. Residues Ser69, 165–168 (FGYD), Lys188, and 193–194 (HR) contribute to the substrate site.

Belongs to the HAM1 NTPase family. In terms of assembly, homodimer. Mg(2+) is required as a cofactor.

The enzyme catalyses XTP + H2O = XMP + diphosphate + H(+). It carries out the reaction dITP + H2O = dIMP + diphosphate + H(+). The catalysed reaction is ITP + H2O = IMP + diphosphate + H(+). Pyrophosphatase that catalyzes the hydrolysis of nucleoside triphosphates to their monophosphate derivatives, with a high preference for the non-canonical purine nucleotides XTP (xanthosine triphosphate), dITP (deoxyinosine triphosphate) and ITP. Seems to function as a house-cleaning enzyme that removes non-canonical purine nucleotides from the nucleotide pool, thus preventing their incorporation into DNA/RNA and avoiding chromosomal lesions. The protein is dITP/XTP pyrophosphatase of Leptothrix cholodnii (strain ATCC 51168 / LMG 8142 / SP-6) (Leptothrix discophora (strain SP-6)).